We begin with the raw amino-acid sequence, 222 residues long: Small ribosomal subunit protein eS1 (222 aa).

This sequence belongs to the eukaryotic ribosomal protein eS1 family.

The chain is Small ribosomal subunit protein eS1 from Pyrobaculum neutrophilum (strain DSM 2338 / JCM 9278 / NBRC 100436 / V24Sta) (Thermoproteus neutrophilus).